A 489-amino-acid chain; its full sequence is UDP-N-acetylmuramate--L-alanine ligase (489 aa).

128-134 (GTHGKTT) serves as a coordination point for ATP.

It belongs to the MurCDEF family.

It localises to the cytoplasm. The catalysed reaction is UDP-N-acetyl-alpha-D-muramate + L-alanine + ATP = UDP-N-acetyl-alpha-D-muramoyl-L-alanine + ADP + phosphate + H(+). It participates in cell wall biogenesis; peptidoglycan biosynthesis. Its function is as follows. Cell wall formation. The polypeptide is UDP-N-acetylmuramate--L-alanine ligase (Shewanella woodyi (strain ATCC 51908 / MS32)).